A 1117-amino-acid chain; its full sequence is Guanylate cyclase D (1117 aa).

An N-terminal signal peptide occupies residues 1 to 66; that stretch reads MAGLQQGCHF…ADSLSLLAWA (66 aa). Over 67–479 the chain is Extracellular; that stretch reads RETFTLGVLG…CIRGVQPLGS (413 aa). Cysteine 121 and cysteine 149 are disulfide-bonded. Residues 480 to 500 form a helical membrane-spanning segment; the sequence is LLTLTIACVLALVGGFLAYFI. Residues 501–1117 lie on the Cytoplasmic side of the membrane; that stretch reads RLGLQQLRLL…RKSGEAGPGP (617 aa). A disordered region spans residues 529–557; that stretch reads TPSRRRPHVDSGSESRSVVDGGSPRSVTQ. Residues 541–812 form the Protein kinase domain; sequence SESRSVVDGG…PSLDQIYTQF (272 aa). The interval 874-915 is interaction with NCALD; that stretch reads MGTTVEPEYFDQVTIYFSDIVGFTTISALSEPIEVVGFLNDL. The region spanning 887-1017 is the Guanylate cyclase domain; the sequence is TIYFSDIVGF…DTVNTASRME (131 aa). The interval 1096-1117 is disordered; that stretch reads GFAKARQGLAEPRKSGEAGPGP.

This sequence belongs to the adenylyl cyclase class-4/guanylyl cyclase family. In terms of assembly, interacts (via the catalytic domain) with NCALD. As to expression, found in a subset of olfactory neurons in the main olfactory epithelium.

The protein resides in the cell projection. It localises to the cilium membrane. It carries out the reaction GTP = 3',5'-cyclic GMP + diphosphate. Activated by Ca(2+). Its function is as follows. Functions as an olfactory receptor activated by urine odorants, uroguanylin and guanylin and as well by the volatile semiochemicals carbon disulfide (CS2) and carbon dioxide (CO2). Has guanylate cyclase activity upon binding of the ligand. Activation of GUCY2D neurons leads to the cGMP-dependent activation of the CNGA3 channels, membrane depolarization and an increase in action potential frequency. Signaling pathways activated by GUCY2D may trigger social behaviors such as acquisition of food preference. This chain is Guanylate cyclase D, found in Mus musculus (Mouse).